A 407-amino-acid polypeptide reads, in one-letter code: Imidazolonepropionase (407 aa).

His68 and His70 together coordinate Fe(3+). Zn(2+)-binding residues include His68 and His70. 4-imidazolone-5-propanoate is bound by residues Arg77, Tyr140, and His173. Residue Tyr140 participates in N-formimidoyl-L-glutamate binding. Fe(3+) is bound at residue His238. His238 contacts Zn(2+). Gln241 is a 4-imidazolone-5-propanoate binding site. Fe(3+) is bound at residue Asp313. A Zn(2+)-binding site is contributed by Asp313. Residues Asn315 and Gly317 each contribute to the N-formimidoyl-L-glutamate site. 4-imidazolone-5-propanoate is bound at residue Thr318.

This sequence belongs to the metallo-dependent hydrolases superfamily. HutI family. It depends on Zn(2+) as a cofactor. The cofactor is Fe(3+).

The protein resides in the cytoplasm. It catalyses the reaction 4-imidazolone-5-propanoate + H2O = N-formimidoyl-L-glutamate. It participates in amino-acid degradation; L-histidine degradation into L-glutamate; N-formimidoyl-L-glutamate from L-histidine: step 3/3. In terms of biological role, catalyzes the hydrolytic cleavage of the carbon-nitrogen bond in imidazolone-5-propanoate to yield N-formimidoyl-L-glutamate. It is the third step in the universal histidine degradation pathway. The protein is Imidazolonepropionase of Burkholderia multivorans (strain ATCC 17616 / 249).